We begin with the raw amino-acid sequence, 923 residues long: ATP-dependent Clp protease ATP-binding subunit ClpA homolog CD4B, chloroplastic (923 aa).

The Clp R domain occupies 92–234 (FERFTEKAIK…RTQVIRMVGE (143 aa)). Repeat regions lie at residues 95 to 160 (FTEK…IGRG) and 170 to 234 (FTPR…MVGE). Residues 255 to 502 (LEEYGTNLTK…RVRLRHAQLP (248 aa)) are i. 300–307 (GEPGVGKT) is a binding site for ATP. A UVR domain is found at 509 to 544 (EKELRQITKEKNEAVRGQDFEKAGELRDREMDLKAQ). The II stretch occupies residues 569-760 (VTEADIQHIV…LLIMTSNVGS (192 aa)). 643–650 (GPTGVGKS) provides a ligand contact to ATP.

The protein belongs to the ClpA/ClpB family.

The protein resides in the plastid. The protein localises to the chloroplast. May interact with a ClpP-like protease involved in degradation of denatured proteins in the chloroplast. In Solanum lycopersicum (Tomato), this protein is ATP-dependent Clp protease ATP-binding subunit ClpA homolog CD4B, chloroplastic (CD4B).